A 676-amino-acid polypeptide reads, in one-letter code: DNA ligase (676 aa).

NAD(+)-binding positions include 32-36 (DAEYD), 81-82 (SL), and Glu113. The active-site N6-AMP-lysine intermediate is the Lys115. Arg136, Glu173, Lys291, and Lys315 together coordinate NAD(+). Residues Cys409, Cys412, Cys427, and Cys433 each coordinate Zn(2+). Positions 595–676 (SEKTYFFNKK…LNSLIRIKEQ (82 aa)) constitute a BRCT domain.

Belongs to the NAD-dependent DNA ligase family. LigA subfamily. Mg(2+) serves as cofactor. It depends on Mn(2+) as a cofactor.

It carries out the reaction NAD(+) + (deoxyribonucleotide)n-3'-hydroxyl + 5'-phospho-(deoxyribonucleotide)m = (deoxyribonucleotide)n+m + AMP + beta-nicotinamide D-nucleotide.. Functionally, DNA ligase that catalyzes the formation of phosphodiester linkages between 5'-phosphoryl and 3'-hydroxyl groups in double-stranded DNA using NAD as a coenzyme and as the energy source for the reaction. It is essential for DNA replication and repair of damaged DNA. This chain is DNA ligase, found in Buchnera aphidicola subsp. Acyrthosiphon pisum (strain Tuc7).